Reading from the N-terminus, the 320-residue chain is tRNA dimethylallyltransferase (320 aa).

17-24 serves as a coordination point for ATP; that stretch reads GPTASGKT. 19–24 is a substrate binding site; that stretch reads TASGKT. Interaction with substrate tRNA stretches follow at residues 42–45, 166–170, and 249–254; these read DSAL, QRIQR, and RCVGYR.

This sequence belongs to the IPP transferase family. Monomer. It depends on Mg(2+) as a cofactor.

It carries out the reaction adenosine(37) in tRNA + dimethylallyl diphosphate = N(6)-dimethylallyladenosine(37) in tRNA + diphosphate. Its function is as follows. Catalyzes the transfer of a dimethylallyl group onto the adenine at position 37 in tRNAs that read codons beginning with uridine, leading to the formation of N6-(dimethylallyl)adenosine (i(6)A). The protein is tRNA dimethylallyltransferase of Herminiimonas arsenicoxydans.